We begin with the raw amino-acid sequence, 491 residues long: Nickel-binding protein NikA (491 aa).

An N-terminal signal peptide occupies residues 1-18 (MKFKRLATIFSAVLVLSG). Cys19 is lipidated: N-palmitoyl cysteine. Residue Cys19 is the site of S-diacylglycerol cysteine attachment.

It belongs to the bacterial solute-binding protein 5 family. The complex is composed of two ATP-binding proteins (NikD and NikE), two transmembrane proteins (NikB and NikC) and a solute-binding protein (NikA).

It is found in the cell membrane. Its function is as follows. Part of the ABC transporter complex NikABCDE (Opp2) involved in nickel import. Binds nickel and transfers it to the membrane-bound permease. Required for full urease activity and plays a significant role in the virulence of S.aureus during urinary tract infection (UTI). May bind nickel via a nickel-chelator. The protein is Nickel-binding protein NikA of Staphylococcus aureus (strain NCTC 8325 / PS 47).